We begin with the raw amino-acid sequence, 173 residues long: Crossover junction endodeoxyribonuclease RuvC (173 aa).

Residues D8, E67, and D139 contribute to the active site. Positions 8, 67, and 139 each coordinate Mg(2+).

It belongs to the RuvC family. In terms of assembly, homodimer which binds Holliday junction (HJ) DNA. The HJ becomes 2-fold symmetrical on binding to RuvC with unstacked arms; it has a different conformation from HJ DNA in complex with RuvA. In the full resolvosome a probable DNA-RuvA(4)-RuvB(12)-RuvC(2) complex forms which resolves the HJ. Requires Mg(2+) as cofactor.

Its subcellular location is the cytoplasm. It carries out the reaction Endonucleolytic cleavage at a junction such as a reciprocal single-stranded crossover between two homologous DNA duplexes (Holliday junction).. Its function is as follows. The RuvA-RuvB-RuvC complex processes Holliday junction (HJ) DNA during genetic recombination and DNA repair. Endonuclease that resolves HJ intermediates. Cleaves cruciform DNA by making single-stranded nicks across the HJ at symmetrical positions within the homologous arms, yielding a 5'-phosphate and a 3'-hydroxyl group; requires a central core of homology in the junction. The consensus cleavage sequence is 5'-(A/T)TT(C/G)-3'. Cleavage occurs on the 3'-side of the TT dinucleotide at the point of strand exchange. HJ branch migration catalyzed by RuvA-RuvB allows RuvC to scan DNA until it finds its consensus sequence, where it cleaves and resolves the cruciform DNA. In Vibrio atlanticus (strain LGP32) (Vibrio splendidus (strain Mel32)), this protein is Crossover junction endodeoxyribonuclease RuvC.